The chain runs to 273 residues: Pantothenate synthetase (273 aa).

27 to 34 is an ATP binding site; the sequence is MGALHQGH. The active-site Proton donor is H34. Position 58 (Q58) interacts with (R)-pantoate. Q58 contributes to the beta-alanine binding site. Position 144–147 (144–147) interacts with ATP; it reads GKKD. A (R)-pantoate-binding site is contributed by Q150. ATP-binding positions include V173 and 181–184; that span reads LSSR.

This sequence belongs to the pantothenate synthetase family. In terms of assembly, homodimer.

It is found in the cytoplasm. It carries out the reaction (R)-pantoate + beta-alanine + ATP = (R)-pantothenate + AMP + diphosphate + H(+). It functions in the pathway cofactor biosynthesis; (R)-pantothenate biosynthesis; (R)-pantothenate from (R)-pantoate and beta-alanine: step 1/1. Catalyzes the condensation of pantoate with beta-alanine in an ATP-dependent reaction via a pantoyl-adenylate intermediate. The chain is Pantothenate synthetase from Nitratiruptor sp. (strain SB155-2).